Reading from the N-terminus, the 898-residue chain is Interleukin enhancer-binding factor 3 (898 aa).

Positions 5-378 (RIFVNDDRHV…PMKRPMEEDG (374 aa)) constitute a DZF domain. The interval 52–85 (QEKGNSELSEAENMDTPPDDESKEGAGEQKAEHM) is disordered. Residues 60 to 73 (SEAENMDTPPDDES) are compositionally biased toward acidic residues. Thr67 bears the Phosphothreonine mark. The span at 74-85 (KEGAGEQKAEHM) shows a compositional bias: basic and acidic residues. Residue Lys100 is modified to N6-acetyllysine. Thr188 is modified (phosphothreonine; by PKR). Ser190 carries the phosphoserine modification. Lys297 is covalently cross-linked (Glycyl lysine isopeptide (Lys-Gly) (interchain with G-Cter in ubiquitin)). The residue at position 315 (Thr315) is a Phosphothreonine; by PKR. A Glycyl lysine isopeptide (Lys-Gly) (interchain with G-Cter in SUMO1) cross-link involves residue Lys348. The disordered stretch occupies residues 363 to 402 (TTYAITPMKRPMEEDGEEKSPSKKKKKIQKKEEKADPPQA). Positions 371 to 389 (KRPMEEDGEEKSPSKKKKK) match the Bipartite nuclear localization signal motif. The span at 372–383 (RPMEEDGEEKSP) shows a compositional bias: basic and acidic residues. Phosphoserine occurs at positions 382 and 384. Lys396 participates in a covalent cross-link: Glycyl lysine isopeptide (Lys-Gly) (interchain with G-Cter in SUMO2). In terms of domain architecture, DRBM 1 spans 398-467 (DPPQAMNALM…AVKVLQDMGL (70 aa)). The residue at position 460 (Lys460) is an N6-acetyllysine. Disordered regions lie at residues 466–495 (GLPT…IVAP) and 505–524 (PSSV…LTKH). Over residues 472–481 (EGRDSSKGED) the composition is skewed to basic and acidic residues. Ser476, Ser477, Ser482, and Ser486 each carry phosphoserine. A Glycyl lysine isopeptide (Lys-Gly) (interchain with G-Cter in SUMO2) cross-link involves residue Lys489. The DRBM 2 domain occupies 524–590 (HGKNPVMELN…ALAALEKLFP (67 aa)). Thr592 carries the post-translational modification Phosphothreonine. The interaction with PRMT1 stretch occupies residues 609–898 (RGGPKFAAKP…TEHSMNYQYR (290 aa)). 2 disordered regions span residues 631 to 661 (NEVP…GGAN) and 719 to 898 (QGDS…YQYR). Gly residues predominate over residues 644-661 (RGGNIRGRGRGRGFGGAN). Low complexity-rich tracts occupy residues 745–769 (SYSS…SSYG), 783–794 (GSYSSYSNSYNS), and 802–812 (DYSYDSKFNYS). Phosphoserine is present on residues Ser794, Ser812, Ser814, and Ser818. Residues 813–822 (GSGGRSGGNS) are compositionally biased toward gly residues. Positions 823 to 834 (YGSSGSSSYNTG) are enriched in low complexity. A compositionally biased stretch (gly residues) spans 835–845 (SHGGYGTGSGG). Positions 846–886 (SSSYQGKQGGYSSQSNYSSPGSSQSYSGPASSYQSSQGGYS) are enriched in low complexity.

As to quaternary structure, identified in a IGF2BP1-dependent mRNP granule complex containing untranslated mRNAs. Interacts with FUS and SMN. Interacts (via C-terminus) with PRMT1. Forms a complex with ILF2. Can also bind to PRKDC/XRCC7: this may stabilize the interaction of PRKDC/XRCC7 and the heterodimeric complex of XRCC6/KU70 and XRCC5/KU80. Forms a heteromeric complex with ZNF346 and ILF3. Found in a nuclear export complex with XPO5, ILF3, Ran and double-stranded RNA or double-stranded minihelix VA1 RNA. Found in a nuclear export complex with XPO5, RAN, ILF3, ZNF346 and double-stranded RNA. Interacts with XPO5 and ZNF346. Forms a complex with ILF2, YLPM1, KHDRBS1, RBMX, NCOA5 and PPP1CA. Interacts with AGO1 and AGO2. Interacts with DHX36; this interaction occurs in a RNA-dependent manner. Interacts with ELAVL1; this interaction occurs in a RNA-dependent manner. Interacts with HAVCR2; this interaction promotes ILF3 ubiquitination and subsequent degradation. Phosphorylated at Thr-188 and Thr-315 by PKR in response to RNA viruses. This phosphorylation results in the dissociation of ILF2 from the ILF2-ILF3 complex resulting in a cytoplasmic sequestration of ILF3 where it can bind to viral RNAs and impede viral replication. In terms of processing, methylated by protein arginine N-methyltransferase 1. In terms of tissue distribution, ubiquitous. Expressed at high levels in the thymus, testis, ovary and at lower levelss in the spleen.

The protein resides in the nucleus. It is found in the nucleolus. The protein localises to the cytoplasm. In terms of biological role, RNA-binding protein that plays an essential role in the biogenesis of circular RNAs (circRNAs) which are produced by back-splicing circularization of pre-mRNAs. Within the nucleus, promotes circRNAs processing by stabilizing the regulatory elements residing in the flanking introns of the circularized exons. Plays thereby a role in the back-splicing of a subset of circRNAs. As a consequence, participates in a wide range of transcriptional and post-transcriptional processes. Binds to poly-U elements and AU-rich elements (AREs) in the 3'-UTR of target mRNAs. Upon viral infection, ILF3 accumulates in the cytoplasm and participates in the innate antiviral response. Mechanistically, ILF3 becomes phosphorylated and activated by the double-stranded RNA-activated protein kinase/PKR which releases ILF3 from cellular mature circRNAs. In turn, unbound ILF3 molecules are able to interact with and thus inhibit viral mRNAs. In Mus musculus (Mouse), this protein is Interleukin enhancer-binding factor 3 (Ilf3).